Here is a 619-residue protein sequence, read N- to C-terminus: Enolase 4 (619 aa).

Residues 173–184 (DKERKELEKSQE) show a composition bias toward basic and acidic residues. The segment at 173-236 (DKERKELEKS…PPEPPEPVLH (64 aa)) is disordered. The segment covering 188 to 206 (PAPPPVTLPPPPPPPPPPP) has biased composition (pro residues). Substrate is bound at residue glutamate 302. The disordered stretch occupies residues 333–354 (TLPPPKQETKKGHNGSKRAQPP). The active-site Proton acceptor is the lysine 497. Residue lysine 548 participates in substrate binding.

Belongs to the enolase family. Interacts with ENO1. Isoform 1 and isoform 4 interact with AKAP4. In terms of processing, synthesized as an approximately 70-kDa precursor, which then undergoes proteolytic cleavage to an approximately 60-kDa enzyme; HOATZ associates directly or indirectly with ENO4 to mediate this process before its transport to mature flagella. As to expression, testis-specific. Expressed in spermatids and ependyma (at protein level). In terms of tissue distribution, expressed at higher levels in late spermatids than in pachytene spermatocytes. Expressed at higher levels in pachytene spermatocytes than in late spermatids.

The catalysed reaction is (2R)-2-phosphoglycerate = phosphoenolpyruvate + H2O. It functions in the pathway carbohydrate degradation; glycolysis; pyruvate from D-glyceraldehyde 3-phosphate: step 4/5. In terms of biological role, required for sperm motility, function and male fertility. May be involved in the normal assembly of the sperm fibrous sheath and provides most of the enolase activity in sperm. The sequence is that of Enolase 4 (Eno4) from Mus musculus (Mouse).